Reading from the N-terminus, the 831-residue chain is Periplasmic nitrate reductase (831 aa).

A signal peptide (tat-type signal) is located at residues 1 to 29 (MKFTRREFMKAQAAASAAAVAGIALPATA). One can recognise a 4Fe-4S Mo/W bis-MGD-type domain in the interval 41 to 97 (IKWEKAPCRFCGTGCSVLVGTQHGRVVATQGDPESPVNKGLNCVKGYFLSKIMYGKD). Residues cysteine 48, cysteine 51, cysteine 55, and cysteine 83 each coordinate [4Fe-4S] cluster. Residues lysine 85, glutamine 152, asparagine 177, cysteine 181, 214–221 (WGSNMAEM), 245–249 (STYTH), 264–266 (QSD), methionine 374, glutamine 378, asparagine 484, 510–511 (SD), lysine 533, aspartate 560, and 720–729 (TGRVLEHWHS) contribute to the Mo-bis(molybdopterin guanine dinucleotide) site. Residue tryptophan 796 participates in substrate binding. 2 residues coordinate Mo-bis(molybdopterin guanine dinucleotide): asparagine 804 and lysine 821.

This sequence belongs to the prokaryotic molybdopterin-containing oxidoreductase family. NasA/NapA/NarB subfamily. In terms of assembly, component of the periplasmic nitrate reductase NapAB complex composed of NapA and NapB. It depends on [4Fe-4S] cluster as a cofactor. Mo-bis(molybdopterin guanine dinucleotide) serves as cofactor. In terms of processing, predicted to be exported by the Tat system. The position of the signal peptide cleavage has not been experimentally proven.

It localises to the periplasm. It carries out the reaction 2 Fe(II)-[cytochrome] + nitrate + 2 H(+) = 2 Fe(III)-[cytochrome] + nitrite + H2O. Its function is as follows. Catalytic subunit of the periplasmic nitrate reductase complex NapAB. Receives electrons from NapB and catalyzes the reduction of nitrate to nitrite. The polypeptide is Periplasmic nitrate reductase (Psychromonas ingrahamii (strain DSM 17664 / CCUG 51855 / 37)).